We begin with the raw amino-acid sequence, 102 residues long: uncharacterized protein (102 aa).

This is an uncharacterized protein from Sulfolobus islandicus rod-shaped virus 1 (SIRV-1).